A 315-amino-acid polypeptide reads, in one-letter code: T-box transcription factor tbx-8 (315 aa).

Residues 11–195 constitute a DNA-binding region (T-box); sequence EDQDKLWNLF…FNPFAKGFRE (185 aa). Residues 193 to 203 are compositionally biased toward basic and acidic residues; that stretch reads FREGSQSDRKR. Disordered regions lie at residues 193-235 and 293-315; these read FREG…SVSP and PPPS…INVV. Positions 205 to 225 are enriched in low complexity; that stretch reads SPSADDSTTDESSSQVSSPQP. Positions 305-315 are enriched in acidic residues; it reads QEDIEQEINVV.

The protein resides in the nucleus. Its function is as follows. Transcription factor. Involved in the control of early morphogenesis of the intestine, hypodermis and body-wall muscle. Involved in regulating expression of vab-7. Appears to have partially redundant function to tbx-9. This chain is T-box transcription factor tbx-8 (tbx-8), found in Caenorhabditis elegans.